The primary structure comprises 699 residues: Serine/threonine-protein kinase PRR2 (699 aa).

Residues 168–193 (SSTKKNLANDISDNKHNNNSSNTIGH) form a disordered region. Residues 184–193 (NNNSSNTIGH) are compositionally biased toward polar residues. One can recognise a Protein kinase domain in the interval 361–653 (RDLDVVLGEG…INGILQDGWI (293 aa)). Residues 367–375 (LGEGSGGKV) and Lys-390 contribute to the ATP site. The Proton acceptor role is filled by Asp-484.

Belongs to the protein kinase superfamily. Ser/Thr protein kinase family.

The enzyme catalyses L-seryl-[protein] + ATP = O-phospho-L-seryl-[protein] + ADP + H(+). It catalyses the reaction L-threonyl-[protein] + ATP = O-phospho-L-threonyl-[protein] + ADP + H(+). Functionally, protein kinase that functions as a regulator in the pheromone-induced mating pathway downstream of mitogen-activated protein kinase (MAPK) FUS3. Diminishes transcriptional induction of genes in response to pheromone signaling. This is Serine/threonine-protein kinase PRR2 (PRR2) from Saccharomyces cerevisiae (strain ATCC 204508 / S288c) (Baker's yeast).